Reading from the N-terminus, the 173-residue chain is MDVAKEKELREAEALMEKNVLLTSIDKVLNWGRGHSFWPVTFGLACCAIEMMAAGGPRVDISRFGYEVFRASPRHADVMIVAGTCTRKMAPLLRMIYDQMPEPKWVIAMGSCASAGGPFADSYSMLTGVDKIVPVDVYIPGCPPRPESLVYGLLQLQHKVNHPDKVRLLKHGK.

Positions 46, 47, 112, and 142 each coordinate [4Fe-4S] cluster.

Belongs to the complex I 20 kDa subunit family. NDH-1 is composed of 14 different subunits. Subunits NuoB, C, D, E, F, and G constitute the peripheral sector of the complex. The cofactor is [4Fe-4S] cluster.

It is found in the cell membrane. It catalyses the reaction a quinone + NADH + 5 H(+)(in) = a quinol + NAD(+) + 4 H(+)(out). Its function is as follows. NDH-1 shuttles electrons from NADH, via FMN and iron-sulfur (Fe-S) centers, to quinones in the respiratory chain. The immediate electron acceptor for the enzyme in this species is believed to be a menaquinone. Couples the redox reaction to proton translocation (for every two electrons transferred, four hydrogen ions are translocated across the cytoplasmic membrane), and thus conserves the redox energy in a proton gradient. This Desulfitobacterium hafniense (strain DSM 10664 / DCB-2) protein is NADH-quinone oxidoreductase subunit B.